The chain runs to 205 residues: Holliday junction branch migration complex subunit RuvA (205 aa).

Residues M1 to K62 are domain I. The domain II stretch occupies residues T63–L141. The tract at residues F142–K152 is flexible linker. A domain III region spans residues G153–R205.

The protein belongs to the RuvA family. Homotetramer. Forms an RuvA(8)-RuvB(12)-Holliday junction (HJ) complex. HJ DNA is sandwiched between 2 RuvA tetramers; dsDNA enters through RuvA and exits via RuvB. An RuvB hexamer assembles on each DNA strand where it exits the tetramer. Each RuvB hexamer is contacted by two RuvA subunits (via domain III) on 2 adjacent RuvB subunits; this complex drives branch migration. In the full resolvosome a probable DNA-RuvA(4)-RuvB(12)-RuvC(2) complex forms which resolves the HJ.

Its subcellular location is the cytoplasm. In terms of biological role, the RuvA-RuvB-RuvC complex processes Holliday junction (HJ) DNA during genetic recombination and DNA repair, while the RuvA-RuvB complex plays an important role in the rescue of blocked DNA replication forks via replication fork reversal (RFR). RuvA specifically binds to HJ cruciform DNA, conferring on it an open structure. The RuvB hexamer acts as an ATP-dependent pump, pulling dsDNA into and through the RuvAB complex. HJ branch migration allows RuvC to scan DNA until it finds its consensus sequence, where it cleaves and resolves the cruciform DNA. In Bacillus cereus (strain G9842), this protein is Holliday junction branch migration complex subunit RuvA.